The chain runs to 119 residues: Large ribosomal subunit protein uL22 (119 aa).

This sequence belongs to the universal ribosomal protein uL22 family. As to quaternary structure, part of the 50S ribosomal subunit.

Functionally, this protein binds specifically to 23S rRNA; its binding is stimulated by other ribosomal proteins, e.g. L4, L17, and L20. It is important during the early stages of 50S assembly. It makes multiple contacts with different domains of the 23S rRNA in the assembled 50S subunit and ribosome. Its function is as follows. The globular domain of the protein is located near the polypeptide exit tunnel on the outside of the subunit, while an extended beta-hairpin is found that lines the wall of the exit tunnel in the center of the 70S ribosome. This Rickettsia typhi (strain ATCC VR-144 / Wilmington) protein is Large ribosomal subunit protein uL22.